The following is a 907-amino-acid chain: Interference hedgehog (907 aa).

A signal peptide spans M1–A23. Residues A24–P709 are Extracellular-facing. Ig-like C2-type domains follow at residues P42–S149, G152–A233, P252–L340, and P346–N433. 3 disulfides stabilise this stretch: C65-C127, C173-C221, and C276-C324. Residues N101, N203, N300, and N355 are each glycosylated (N-linked (GlcNAc...) asparagine). An intrachain disulfide couples C367 to C415. Residues G427–V474 are disordered. The segment covering Q462–V474 has biased composition (polar residues). 2 Fibronectin type-III domains span residues P468–G578 and V586–P681. Residue N473 is glycosylated (N-linked (GlcNAc...) asparagine). The heparin site is built by R504, K511, and K513. N537 and N548 each carry an N-linked (GlcNAc...) asparagine glycan. Residue R552 participates in heparin binding. A glycan (N-linked (GlcNAc...) asparagine) is linked at N568. Residues G676–Q688 show a composition bias toward polar residues. Residues G676 to H701 are disordered. N702 is a glycosylation site (N-linked (GlcNAc...) asparagine). A helical membrane pass occupies residues M710–L730. Over C731–V907 the chain is Cytoplasmic. Disordered regions lie at residues A780–D805 and M829–G881. Low complexity-rich tracts occupy residues Q781–Q794 and N853–G863. The span at L865–N878 shows a compositional bias: polar residues.

Belongs to the immunoglobulin superfamily. IHOG family. Homodimer. Heterotetramer; 2 iHog chains bind 2 hh chains when facilitated by heparin, heparin is required to promote high-affinity interactions between hh and iHog.

It localises to the membrane. In terms of biological role, mediates response to the active Hedgehog (Hh) protein signal in embryos, functioning upstream or at the level of patched (ptc). This chain is Interference hedgehog, found in Drosophila virilis (Fruit fly).